Consider the following 258-residue polypeptide: Deoxyribose-phosphate aldolase (258 aa).

The active-site Proton donor/acceptor is Asp-102. Lys-165 acts as the Schiff-base intermediate with acetaldehyde in catalysis. The active-site Proton donor/acceptor is Lys-199.

Belongs to the DeoC/FbaB aldolase family. DeoC type 2 subfamily.

Its subcellular location is the cytoplasm. It carries out the reaction 2-deoxy-D-ribose 5-phosphate = D-glyceraldehyde 3-phosphate + acetaldehyde. Its pathway is carbohydrate degradation; 2-deoxy-D-ribose 1-phosphate degradation; D-glyceraldehyde 3-phosphate and acetaldehyde from 2-deoxy-alpha-D-ribose 1-phosphate: step 2/2. Catalyzes a reversible aldol reaction between acetaldehyde and D-glyceraldehyde 3-phosphate to generate 2-deoxy-D-ribose 5-phosphate. The protein is Deoxyribose-phosphate aldolase of Vibrio campbellii (strain ATCC BAA-1116).